Consider the following 79-residue polypeptide: Acyl carrier protein (79 aa).

One can recognise a Carrier domain in the interval 2 to 77 (SEIGERVKKI…DATKFLEKNA (76 aa)). At Ser-37 the chain carries O-(pantetheine 4'-phosphoryl)serine.

Belongs to the acyl carrier protein (ACP) family. 4'-phosphopantetheine is transferred from CoA to a specific serine of apo-ACP by AcpS. This modification is essential for activity because fatty acids are bound in thioester linkage to the sulfhydryl of the prosthetic group.

It is found in the cytoplasm. Its pathway is lipid metabolism; fatty acid biosynthesis. Carrier of the growing fatty acid chain in fatty acid biosynthesis. The polypeptide is Acyl carrier protein (Rhodopseudomonas palustris (strain HaA2)).